The following is a 590-amino-acid chain: Aspartate--tRNA(Asp/Asn) ligase (590 aa).

Residue glutamate 176 participates in L-aspartate binding. Residues 200-203 (QLFK) are aspartate. L-aspartate-binding residues include arginine 222 and histidine 451. 222–224 (RDE) is a binding site for ATP. An ATP-binding site is contributed by glutamate 485. Residue arginine 492 participates in L-aspartate binding. Residue 537–540 (GIDR) participates in ATP binding.

This sequence belongs to the class-II aminoacyl-tRNA synthetase family. Type 1 subfamily. Homodimer.

The protein resides in the cytoplasm. It carries out the reaction tRNA(Asx) + L-aspartate + ATP = L-aspartyl-tRNA(Asx) + AMP + diphosphate. Aspartyl-tRNA synthetase with relaxed tRNA specificity since it is able to aspartylate not only its cognate tRNA(Asp) but also tRNA(Asn). Reaction proceeds in two steps: L-aspartate is first activated by ATP to form Asp-AMP and then transferred to the acceptor end of tRNA(Asp/Asn). In Ehrlichia ruminantium (strain Gardel), this protein is Aspartate--tRNA(Asp/Asn) ligase.